We begin with the raw amino-acid sequence, 210 residues long: High-affinity nitrate transporter 3.1 (210 aa).

Residues 1–22 (MAIQKILFASLLICSLIQSIHG) form the signal peptide. The helical transmembrane segment at 178 to 198 (LDIASICFSVFSVVALVVFFV) threads the bilayer.

It belongs to the NAR2 family. In terms of assembly, heterotetramer composed of two NRT2.1 and two NRT3.1. Interacts with NRT2.1 and NRT2.3. Interacts with all other NRT2 transporters, including NRT2.5. As to expression, highly expressed in roots. Detected in shoots.

It localises to the cell membrane. Acts as a dual component transporter with NTR2.1. Required for high-affinity nitrate transport. Acts as a repressor of lateral root initiation. May be involved in targeting NRT2 proteins to the plasma membrane. This is High-affinity nitrate transporter 3.1 (NRT3.1) from Arabidopsis thaliana (Mouse-ear cress).